Reading from the N-terminus, the 346-residue chain is Uroporphyrinogen decarboxylase (346 aa).

Residues 23 to 27, D72, Y149, T204, and H318 contribute to the substrate site; that span reads RQAGR.

Belongs to the uroporphyrinogen decarboxylase family. As to quaternary structure, homodimer.

It localises to the cytoplasm. It catalyses the reaction uroporphyrinogen III + 4 H(+) = coproporphyrinogen III + 4 CO2. Its pathway is porphyrin-containing compound metabolism; protoporphyrin-IX biosynthesis; coproporphyrinogen-III from 5-aminolevulinate: step 4/4. In terms of biological role, catalyzes the decarboxylation of four acetate groups of uroporphyrinogen-III to yield coproporphyrinogen-III. This is Uroporphyrinogen decarboxylase from Synechococcus sp. (strain JA-2-3B'a(2-13)) (Cyanobacteria bacterium Yellowstone B-Prime).